Here is a 444-residue protein sequence, read N- to C-terminus: C4-dicarboxylate transport protein 2 (444 aa).

6 helical membrane-spanning segments follow: residues 23-43, 61-81, 95-115, 162-182, 198-218, and 236-256; these read ILYV…WLWP, LIKM…IAHI, LVYF…VANV, GEIL…MGLG, AMFG…FGAM, and LIAT…GIIA.

It belongs to the dicarboxylate/amino acid:cation symporter (DAACS) (TC 2.A.23) family.

Its subcellular location is the cell inner membrane. In terms of biological role, responsible for the transport of dicarboxylates such as succinate, fumarate, and malate from the periplasm across the membrane. The polypeptide is C4-dicarboxylate transport protein 2 (Bradyrhizobium diazoefficiens (strain JCM 10833 / BCRC 13528 / IAM 13628 / NBRC 14792 / USDA 110)).